A 425-amino-acid chain; its full sequence is MTKALDGVRILDFTHVQSGPTCTQLLAWFGADVIKVERPGVGDITRGQLQDLPNVDSLYFTMLNHNKRSITLDTKNPKGKEVLTELIKTCDVLVENFGPGVLDRMGFPWEKIQSINPKMIVASIKGFGPGPYEDCKVYENVAQCTGGAASTTGFRDGPPLVTGAQIGDSGTGLHLALGIVTALYQRTTTGRGQRVTAAMQDGVLNLTRVKLRDQQRLAHGPLKEFSQFGEGIPFGEAVPRAGNDSGGGQPGRILKCKGWQTDPNAYIYFITQAPVWEKICDVINEPDWKTHAEYAKPAARLKHLNSIFARIEEWTMTKTKFEAMDILNEYDIPCGPILSMKELAEDPSLRATGTVVEVEHPTRGKYLSVGNPIKLSDSPTDVQRSPLLGEHTDEILRQVLGFSDHQVAEIHDSGALDPPRKAAAE.

Residues 17–18 (QS), Arg-38, 72–75 (LDTK), 96–98 (NFG), Arg-104, and 136–139 (KVYE) each bind CoA. The active-site Nucleophile is Asp-168. 247-249 (GGQ) is a substrate binding site.

It belongs to the CoA-transferase III family. Frc subfamily. As to quaternary structure, homodimer.

The catalysed reaction is formyl-CoA + oxalate = oxalyl-CoA + formate. It participates in metabolic intermediate degradation; oxalate degradation; CO(2) and formate from oxalate: step 1/2. Functionally, involved in the catabolism of oxalate and in the adapatation to low pH via the induction of the oxalate-dependent acid tolerance response (ATR). Catalyzes the transfer of the CoA moiety from formyl-CoA to oxalate. The sequence is that of Formyl-CoA:oxalate CoA-transferase from Rhodopseudomonas palustris (strain BisA53).